The chain runs to 154 residues: UPF0178 protein RC1_2062 (154 aa).

This sequence belongs to the UPF0178 family.

This is UPF0178 protein RC1_2062 from Rhodospirillum centenum (strain ATCC 51521 / SW).